The sequence spans 244 residues: Tegument protein UL51 homolog (244 aa).

Cysteine 10 carries S-palmitoyl cysteine; by host lipidation.

This sequence belongs to the herpesviridae UL51 family. As to quaternary structure, oligomerizes. Interacts with ORF55; this interaction mediates ORF55 incorporation to virions. Phosphorylated. In terms of processing, palmitoylation is necessary for Golgi localization.

The protein resides in the virion tegument. The protein localises to the host cytoplasm. It is found in the host Golgi apparatus. Its function is as follows. Plays several roles during the time course of infection, including egress of virus particles from the perinuclear space and secondary envelopment of cytoplasmic capsids that bud into specific trans-Golgi network (TGN)-derived membranes. The chain is Tegument protein UL51 homolog (8) from Equus caballus (Horse).